The following is a 725-amino-acid chain: Palmitoyltransferase AKR1 (725 aa).

Over 1 to 303 (MGTIAMASIN…LKDKRSFVTR (303 aa)) the chain is Cytoplasmic. ANK repeat units follow at residues 84-113 (EGITPLHWAAINNQYAMCKFLIEHGAEINR), 118-147 (SIATPLQWAAQRCHYYTVNLLLQHGADPLV), 151-180 (QGYNTLHISTFNGNVLLLVLLLHQGIPVDV), 184-213 (FGHTALMWAAYKGFPQCVDLFLRWGASVHA), and 217-246 (QGFTALHWALVKGSPGCILKLIEYGADRFA). The helical transmembrane segment at 304 to 324 (FLFFWPFVLVWAMLVAMSSAP) threads the bilayer. The Lumenal portion of the chain corresponds to 325 to 326 (VY). The helical transmembrane segment at 327-347 (IGVPLGIAAVYAIQWVAQQVL) threads the bilayer. The Cytoplasmic portion of the chain corresponds to 348–364 (EYAPSDMRHFHKTPWLT). The helical transmembrane segment at 365–385 (GIFAATLFWTGVNWLTTVLFA) threads the bilayer. Over 386-397 (TTLGAPEGKGHG) the chain is Lumenal. The chain crosses the membrane as a helical span at residues 398–418 (ILNFLFALFFGFTVYFYIASM). Residues 419-495 (RYDPGFVPKM…NCVGINNHRH (77 aa)) are Cytoplasmic-facing. The DHHC domain occupies 451–501 (NFCVTCMIQTPLRSKHCRRCQRCVAKHDHHCPWVYNCVGINNHRHFFFYLI). The S-palmitoyl cysteine intermediate role is filled by Cys-481. The helical transmembrane segment at 496–516 (FFFYLISLTMGIVSYDFLLYY) threads the bilayer. Residues 517-547 (YFDTVSKNASETCNVLSPTLCKYINADSYTS) lie on the Lumenal side of the membrane. Residues 548 to 568 (ILAIWITMQLLWVTMLLFTQF) traverse the membrane as a helical segment. Residues 569–725 (IQVARAMTTY…YEAVGTEDVV (157 aa)) lie on the Cytoplasmic side of the membrane.

It belongs to the DHHC palmitoyltransferase family. AKR/ZDHHC17 subfamily.

The protein localises to the early endosome membrane. Its subcellular location is the golgi apparatus membrane. It carries out the reaction L-cysteinyl-[protein] + hexadecanoyl-CoA = S-hexadecanoyl-L-cysteinyl-[protein] + CoA. Functionally, palmitoyltransferase specific for casein kinase 1. The polypeptide is Palmitoyltransferase AKR1 (AKR1) (Gibberella zeae (strain ATCC MYA-4620 / CBS 123657 / FGSC 9075 / NRRL 31084 / PH-1) (Wheat head blight fungus)).